We begin with the raw amino-acid sequence, 104 residues long: L-rhamnose mutarotase (104 aa).

Residue Y18 participates in substrate binding. H22 serves as the catalytic Proton donor. Substrate is bound by residues Y41 and W76 to W77.

The protein belongs to the rhamnose mutarotase family. In terms of assembly, homodimer.

Its subcellular location is the cytoplasm. The catalysed reaction is alpha-L-rhamnose = beta-L-rhamnose. It functions in the pathway carbohydrate metabolism; L-rhamnose metabolism. Functionally, involved in the anomeric conversion of L-rhamnose. This is L-rhamnose mutarotase from Burkholderia ambifaria (strain ATCC BAA-244 / DSM 16087 / CCUG 44356 / LMG 19182 / AMMD) (Burkholderia cepacia (strain AMMD)).